Reading from the N-terminus, the 629-residue chain is MSIKAKNAAHLRESAQVDSGSVQPFTRSQKIYVQGSRPDIRVPMREITLDVTPTDFGGEINAPVTVYDTSGPYTDPNVIIDVRKGLADVRSPWIDSRNDTERLPGLSSNFGQQRLSDAELTALRFAHVRNPRRAKAGANVSQMHYARQGIITAEMEYVAIRENMKLQEARAAGLLTQQHAGHSFGASIPKEITAEFVREEIARGRAIIPANINHVELEPMIIGRNFLVKINGNIGNSALGSSIEEEVAKLTWGIRWGSDTVMDLSTGKHIHETREWIIRNSPVPIGTVPIYQALEKVGGAAEDLTWELFRDTLIEQAEQGVDYFTIHAGVLLRYVPLTAKRVTGIVSRGGSIMAKWCLAHHKENFLYTHFEDICEIMKAYDVSFSLGDGLRPGSIADANDAAQFGELETLGELTKIAWKHDVQTMIEGPGHVPMQLIKENMDKQLECCDEAPFYTLGPLTTDIAPGYDHITSGIGAAMIGWFGCAMLCYVTPKEHLGLPNKDDVKTGIITYKIAAHAADLAKGHPGAQIRDNALSKARFEFRWEDQFNLGLDPDTARSYHDETLPKDSAKVAHFCSMCGPKFCSMKITQEVREYAANQRIEAVDVDVAKGLAEQAERFKQEGSQLYKKV.

The tract at residues 1–21 (MSIKAKNAAHLRESAQVDSGS) is disordered. Substrate-binding positions include Asn233, Met262, Tyr291, His327, 347–349 (SRG), 388–391 (DGLR), and Glu427. His431 serves as a coordination point for Zn(2+). Tyr454 is a substrate binding site. His495 contacts Zn(2+). The [4Fe-4S] cluster site is built by Cys575, Cys578, and Cys583.

Belongs to the ThiC family. In terms of assembly, homodimer. Requires [4Fe-4S] cluster as cofactor.

It catalyses the reaction 5-amino-1-(5-phospho-beta-D-ribosyl)imidazole + S-adenosyl-L-methionine = 4-amino-2-methyl-5-(phosphooxymethyl)pyrimidine + CO + 5'-deoxyadenosine + formate + L-methionine + 3 H(+). It functions in the pathway cofactor biosynthesis; thiamine diphosphate biosynthesis. Catalyzes the synthesis of the hydroxymethylpyrimidine phosphate (HMP-P) moiety of thiamine from aminoimidazole ribotide (AIR) in a radical S-adenosyl-L-methionine (SAM)-dependent reaction. The chain is Phosphomethylpyrimidine synthase from Pseudomonas syringae pv. syringae (strain B728a).